Reading from the N-terminus, the 86-residue chain is Small ribosomal subunit protein bS20 (86 aa).

Belongs to the bacterial ribosomal protein bS20 family.

In terms of biological role, binds directly to 16S ribosomal RNA. The protein is Small ribosomal subunit protein bS20 of Rhodococcus opacus (strain B4).